The following is a 472-amino-acid chain: Adenosylhomocysteinase (472 aa).

Residues T63, D138, and E198 each contribute to the substrate site. Residue T199–T201 participates in NAD(+) binding. K228 and D232 together coordinate substrate. NAD(+) contacts are provided by residues N233, G262–G267, E285, N320, I341–H343, and N386.

This sequence belongs to the adenosylhomocysteinase family. It depends on NAD(+) as a cofactor.

The protein localises to the cytoplasm. It carries out the reaction S-adenosyl-L-homocysteine + H2O = L-homocysteine + adenosine. It functions in the pathway amino-acid biosynthesis; L-homocysteine biosynthesis; L-homocysteine from S-adenosyl-L-homocysteine: step 1/1. Its function is as follows. May play a key role in the regulation of the intracellular concentration of adenosylhomocysteine. This Methylococcus capsulatus (strain ATCC 33009 / NCIMB 11132 / Bath) protein is Adenosylhomocysteinase.